The primary structure comprises 411 residues: Glutamate dehydrogenase 3, mitochondrial (411 aa).

A mitochondrion-targeting transit peptide spans 1–18 (MNALAATSRNFRQAARLL). The active site involves Lys102.

It belongs to the Glu/Leu/Phe/Val dehydrogenases family. In terms of tissue distribution, barely expressed in leaves, spikelets and roots. Glumes and stamens specific accumulation.

It is found in the mitochondrion. The enzyme catalyses L-glutamate + NAD(+) + H2O = 2-oxoglutarate + NH4(+) + NADH + H(+). It carries out the reaction L-glutamate + NADP(+) + H2O = 2-oxoglutarate + NH4(+) + NADPH + H(+). The protein is Glutamate dehydrogenase 3, mitochondrial (GDH3) of Oryza sativa subsp. japonica (Rice).